We begin with the raw amino-acid sequence, 394 residues long: MNKKTLKDIDVKGKVVFCRVDFNVPMKDGEVTDDTRIRAALPTIKHLADQGAKVLLASHLGRPKGEVVEELRLTPVAARLGELLGKEVKKADEAYGDAVKAQISEMKDGDVLVLENVRFYPGEEKNDPELAKAFAELADVYVNDAFGAAHRAHASTAGIAEHLPAVAGFLMEKELDVLGKAVSNPDRPFTAIIGGAKVKDKIGVIESLLDKVDNLIIGGGLAYTFVKALGYEVGKSLLEEDKIELAKSFMDRAKEKGVNFYMPEDVLVADDFSNDANVKIVPISEIPSDLEAIDIGTKTRETYADVIKNSKLVVWNGPMGVFEIDLFAQGTKAVAEALAEAKDTYSVIGGGDSAAAVEKFGLADKMSHISTGGGASLEFMEGKELPGVAALNDK.

Residues 21–23 (DFN), Arg36, 59–62 (HLGR), Arg118, and Arg151 each bind substrate. A Phosphoserine modification is found at Ser183. Lys201 contributes to the ATP binding site. Phosphothreonine is present on Thr299. Residues Glu323 and 350 to 353 (GGDS) contribute to the ATP site.

The protein belongs to the phosphoglycerate kinase family. In terms of assembly, monomer.

The protein localises to the cytoplasm. It carries out the reaction (2R)-3-phosphoglycerate + ATP = (2R)-3-phospho-glyceroyl phosphate + ADP. It functions in the pathway carbohydrate degradation; glycolysis; pyruvate from D-glyceraldehyde 3-phosphate: step 2/5. This Bacillus subtilis (strain 168) protein is Phosphoglycerate kinase (pgk).